We begin with the raw amino-acid sequence, 340 residues long: Methionine import ATP-binding protein MetN 2 (340 aa).

The ABC transporter domain maps to 2–241 (ITLQNVVKEY…PQEKVTQRFV (240 aa)). ATP is bound at residue 38 to 45 (GYSGAGKS).

Belongs to the ABC transporter superfamily. Methionine importer (TC 3.A.1.24) family. The complex is composed of two ATP-binding proteins (MetN), two transmembrane proteins (MetI) and a solute-binding protein (MetQ).

It is found in the cell membrane. The catalysed reaction is L-methionine(out) + ATP + H2O = L-methionine(in) + ADP + phosphate + H(+). It carries out the reaction D-methionine(out) + ATP + H2O = D-methionine(in) + ADP + phosphate + H(+). Part of the ABC transporter complex MetNIQ involved in methionine import. Responsible for energy coupling to the transport system. The polypeptide is Methionine import ATP-binding protein MetN 2 (Listeria monocytogenes serotype 4b (strain F2365)).